Reading from the N-terminus, the 179-residue chain is Signal peptidase complex catalytic subunit SEC11A (179 aa).

Over 1–16 the chain is Cytoplasmic; the sequence is MLSLDFLDDVRRMNKR. A helical; Signal-anchor for type II membrane protein membrane pass occupies residues 17–36; that stretch reads QLYYQVLNFGMIVSSALMIW. Residues 37-179 lie on the Lumenal side of the membrane; that stretch reads KGLMVITGSE…LGLFVLVHRE (143 aa). Active-site charge relay system residues include Ser-56, His-96, and Asp-122. The segment at 165-176 is C-terminal short (CTS) helix; it reads AVLFLLGLFVLV.

This sequence belongs to the peptidase S26B family. Component of the signal peptidase complex paralog A (SPC-A) composed of a catalytic subunit SEC11A and three accessory subunits SPCS1, SPCS2 and SPCS3. Within the complex, interacts with SPCS2 and SPCS3. The complex induces a local thinning of the ER membrane which is used to measure the length of the signal peptide (SP) h-region of protein substrates. This ensures the selectivity of the complex towards h-regions shorter than 18-20 amino acids.

The protein localises to the endoplasmic reticulum membrane. The catalysed reaction is Cleavage of hydrophobic, N-terminal signal or leader sequences from secreted and periplasmic proteins.. In terms of biological role, catalytic component of the signal peptidase complex (SPC) which catalyzes the cleavage of N-terminal signal sequences from nascent proteins as they are translocated into the lumen of the endoplasmic reticulum. Specifically cleaves N-terminal signal peptides that contain a hydrophobic alpha-helix (h-region) shorter than 18-20 amino acids. This is Signal peptidase complex catalytic subunit SEC11A (SEC11A) from Bos taurus (Bovine).